A 459-amino-acid polypeptide reads, in one-letter code: Mitochondrial distribution and morphology protein 34 (459 aa).

An SMP-LTD domain is found at 1-190; that stretch reads MSFRFNEAVF…LPSLIFNTSQ (190 aa). Over residues 338 to 347 the composition is skewed to basic and acidic residues; that stretch reads RSNSNDDNAK. The disordered stretch occupies residues 338–375; that stretch reads RSNSNDDNAKPRRRKIKCKKTRTPSNLQSQGEQAVDDS. Residues 348–359 are compositionally biased toward basic residues; sequence PRRRKIKCKKTR.

The protein belongs to the MDM34 family. In terms of assembly, component of the ER-mitochondria encounter structure (ERMES) or MDM complex, composed of MMM1, MDM10, MDM12 and MDM34. Post-translationally, ubiquitinated by a SCF (SKP1-CUL1-F-box protein) E3 ubiquitin-protein ligase complex containing the F-box protein MDM30. Ubiquitination is important for mitochondrial integrity.

The protein resides in the mitochondrion outer membrane. Component of the ERMES/MDM complex, which serves as a molecular tether to connect the endoplasmic reticulum (ER) and mitochondria. Components of this complex are involved in the control of mitochondrial shape and protein biogenesis, and function in nonvesicular lipid trafficking between the ER and mitochondria. MDM34 is required for the interaction of the ER-resident membrane protein MMM1 and the outer mitochondrial membrane-resident beta-barrel protein MDM10. The sequence is that of Mitochondrial distribution and morphology protein 34 from Saccharomyces cerevisiae (strain AWRI1631) (Baker's yeast).